A 207-amino-acid polypeptide reads, in one-letter code: NADH-ubiquinone oxidoreductase chain 6 (207 aa).

5 consecutive transmembrane segments (helical) span residues 15-35 (ILLD…ILVS), 40-60 (SILY…LIGI), 66-86 (LYIL…LSLF), 116-136 (LFIL…NNIY), and 184-204 (ILLI…IVLT).

The protein belongs to the complex I subunit 6 family.

Its subcellular location is the mitochondrion membrane. The enzyme catalyses a ubiquinone + NADH + 5 H(+)(in) = a ubiquinol + NAD(+) + 4 H(+)(out). Functionally, core subunit of the mitochondrial membrane respiratory chain NADH dehydrogenase (Complex I) that is believed to belong to the minimal assembly required for catalysis. Complex I functions in the transfer of electrons from NADH to the respiratory chain. The immediate electron acceptor for the enzyme is believed to be ubiquinone. In Wickerhamomyces canadensis (Yeast), this protein is NADH-ubiquinone oxidoreductase chain 6 (ND6).